Consider the following 2080-residue polypeptide: Fatty acid synthase beta subunit TOXC (2080 aa).

A Starter acyltransferase (SAT) domain is found at 170–397 (GRYFDELREL…LYRFNLLLRK (228 aa)). The active-site For acetyltransferase activity is serine 276. The interval 585–830 (SRLLGLPPIM…VIVETEGLND (246 aa)) is enoyl reductase (ER) domain. Residues 1155 to 1644 (GKSRSWRHAI…LPNQKLEVKL (490 aa)) are dehydratase (DH) domain. In terms of domain architecture, MaoC-like spans 1544–1662 (SVDFEDPVSV…MIRLHIEARA (119 aa)). The 365-residue stretch at 1682-2046 (TYVFTGQGSQ…FQYVYDLTGS (365 aa)) folds into the Malonyl-CoA:ACP transacylase (MAT) domain. The malonyl/palmitoyl transferase (MT/PT) domain stretch occupies residues 1683–2046 (YVFTGQGSQE…FQYVYDLTGS (364 aa)). The active-site For malonyltransferase activity is serine 1828.

Belongs to the fungal fatty acid synthetase subunit beta family.

It carries out the reaction acetyl-CoA + n malonyl-CoA + 2n NADPH + 4n H(+) = a long-chain-acyl-CoA + n CoA + n CO2 + 2n NADP(+).. It catalyses the reaction holo-[ACP] + acetyl-CoA = acetyl-[ACP] + CoA. The catalysed reaction is holo-[ACP] + malonyl-CoA = malonyl-[ACP] + CoA. The enzyme catalyses a (3R)-hydroxyacyl-[ACP] = a (2E)-enoyl-[ACP] + H2O. It carries out the reaction a 2,3-saturated acyl-[ACP] + NAD(+) = a (2E)-enoyl-[ACP] + NADH + H(+). It catalyses the reaction (9Z)-octadecenoyl-[ACP] + H2O = (9Z)-octadecenoate + holo-[ACP] + H(+). It functions in the pathway mycotoxin biosynthesis; HC-toxin biosynthesis. Its function is as follows. Fatty acid synthase beta subunit, part of the diffuse TOX2 gene cluster that mediates the biosynthesis of the HC-toxin, cyclic tetrapeptide of structure cyclo(D-Pro-L-Ala-D-Ala-L-Aeo), where Aeo stands for 2-amino-9,10-epoxi-8-oxodecanoic acid. HC-toxin is a determinant of specificity and virulence in the interaction between the producing fungus and its host, maize. TOXC contribute to the synthesis of the decanoic backbone of 2-amino-9,10-epoxi-8-oxodecanoic acid, an essential precursor for the production of the major forms of HC-toxin by the non-ribosomal peptide synthetase HTS1. The protein is Fatty acid synthase beta subunit TOXC of Cochliobolus carbonum (Maize leaf spot fungus).